Reading from the N-terminus, the 124-residue chain is MATINQLVRKPRSMKVAKSNVPALEACPQKRGVCTRVYTTTPKKPNSALRKVCRVRLTNGYEVSSYIGGEGHNLQEHSVILIRGGRVKDLPGVRYHTVRGALDCSGVKDRKQGRSKYGVKKPKA.

This sequence belongs to the universal ribosomal protein uS12 family. In terms of assembly, part of the 30S ribosomal subunit. Contacts proteins S8 and S17. May interact with IF1 in the 30S initiation complex.

Functionally, with S4 and S5 plays an important role in translational accuracy. Interacts with and stabilizes bases of the 16S rRNA that are involved in tRNA selection in the A site and with the mRNA backbone. Located at the interface of the 30S and 50S subunits, it traverses the body of the 30S subunit contacting proteins on the other side and probably holding the rRNA structure together. The combined cluster of proteins S8, S12 and S17 appears to hold together the shoulder and platform of the 30S subunit. The polypeptide is Small ribosomal subunit protein uS12 (Photorhabdus laumondii subsp. laumondii (strain DSM 15139 / CIP 105565 / TT01) (Photorhabdus luminescens subsp. laumondii)).